A 367-amino-acid polypeptide reads, in one-letter code: Histidinol-phosphate aminotransferase (367 aa).

Lys-222 bears the N6-(pyridoxal phosphate)lysine mark.

The protein belongs to the class-II pyridoxal-phosphate-dependent aminotransferase family. Histidinol-phosphate aminotransferase subfamily. Requires pyridoxal 5'-phosphate as cofactor.

It carries out the reaction L-histidinol phosphate + 2-oxoglutarate = 3-(imidazol-4-yl)-2-oxopropyl phosphate + L-glutamate. It functions in the pathway amino-acid biosynthesis; L-histidine biosynthesis; L-histidine from 5-phospho-alpha-D-ribose 1-diphosphate: step 7/9. The protein is Histidinol-phosphate aminotransferase of Methanosphaera stadtmanae (strain ATCC 43021 / DSM 3091 / JCM 11832 / MCB-3).